The chain runs to 525 residues: Ubiquitin carboxyl-terminal hydrolase 22 (525 aa).

Residues 21 to 138 (PGCSHLGSFK…KEEQRKAWKM (118 aa)) form a UBP-type zinc finger. Zn(2+) is bound by residues C23, H25, C63, C66, C76, C79, C84, H89, H93, H99, C112, and C115. K129 bears the N6-acetyllysine mark. Residue T147 is modified to Phosphothreonine. In terms of domain architecture, USP spans 176 to 520 (RGLINLGNTC…EGYLLFYHKQ (345 aa)). C185 acts as the Nucleophile in catalysis. At S237 the chain carries Phosphoserine. H479 serves as the catalytic Proton acceptor.

Belongs to the peptidase C19 family. UBP8 subfamily. In terms of assembly, component of some SAGA transcription coactivator-HAT complexes, at least composed of ATXN7, ATXN7L3, ENY2, GCN5L2, SUPT3H, TAF10, TRRAP and USP22. Within the SAGA complex, ATXN7L3, ENY2 and USP22 form a subcomplex required for histone deubiquitination. Interacts directly with ATXN7L3; leading to its recruitment to the SAGA complex. Interacts with ATXN7L3 and weakly with ATXN7L3B. Interacts with MED1. In terms of processing, phosphorylated in G2/M phase, but not in G1 phase by CDK1. Post-translationally, ubiquitinated and subsequently degraded in a CDC20-dependent manner. Highly expressed in brain and weakly in other organs.

The protein resides in the nucleus. It is found in the cytoplasm. It catalyses the reaction Thiol-dependent hydrolysis of ester, thioester, amide, peptide and isopeptide bonds formed by the C-terminal Gly of ubiquitin (a 76-residue protein attached to proteins as an intracellular targeting signal).. Functionally, deubiquitinase that plays a role in several cellular processes including transcriptional regulation, cell cycle progression or innate immunity. As part of the transcription regulatory histone acetylation (HAT) complex SAGA, catalyzes the deubiquitination of both histones H2A and H2B, thereby acting as a transcriptional coactivator. Recruited to specific gene promoters by activators such as MYC, where it is required for transcription. Facilitates cell-cycle progression by stabilizing CCNB1 and antagonizing its proteasome-mediated degradation in a cell cycle-specific manner. Modulates cell cycle progression and apoptosis also by antagonizing TP53 transcriptional activation through deacetylase SIRT1 stabilization. Plays multiple roles in immunity and inflammation. Participates in antiviral response by deubiquitinating the importin KPNA2, leading to IRF3 nuclear translocation and subsequent type I interferon production. Acts as a central regulator of type III IFN signaling by negatively regulating STING1 activation and ubiquitination. Inhibits NLRP3 inflammasome activation by promoting NLRP3 degradation through ATG5-dependent autophagy. Deubiquitinates CD274 to induce its stabilization and thereby participates in maintenance of immune tolerance to self. Controls necroptotic cell death by regulating RIPK3 phosphorylation and ubiquitination. During bacterial infection, promotes pro-inflammatory response by targeting TRAF6 and removing its 'Lys-48'-linked polyubiquitination. This chain is Ubiquitin carboxyl-terminal hydrolase 22 (Usp22), found in Mus musculus (Mouse).